The following is a 220-amino-acid chain: Aspartic protease inhibitor 4 (220 aa).

The signal sequence occupies residues 1–23; that stretch reads MMKCLFLLCLCLLPILVFSSTFT. A propeptide spanning residues 24-32 is cleaved from the precursor; it reads SQNPINLPS. Positions 26–31 match the Vacuolar targeting signal motif; that stretch reads NPINLP. Asn51 is a glycosylation site (N-linked (GlcNAc...) asparagine). 2 disulfide bridges follow: Cys80–Cys125 and Cys174–Cys185.

Belongs to the protease inhibitor I3 (leguminous Kunitz-type inhibitor) family. Tubers.

It localises to the vacuole. Inhibits tightly cathepsin D (aspartic protease) and weakly trypsin (serine protease). May protect the plant by inhibiting proteases of invading organisms. The sequence is that of Aspartic protease inhibitor 4 from Solanum tuberosum (Potato).